The sequence spans 665 residues: Probable potassium transport system protein Kup (665 aa).

A run of 12 helical transmembrane segments spans residues 15–35, 48–68, 100–120, 147–167, 173–193, 219–239, 251–271, 292–312, 348–368, 378–398, 403–423, and 431–451; these read SFLI…LYVM, ITPD…TLLT, WLII…MLTP, IIII…HFGT, IFGP…IVNL, LGFF…ALYS, LTWP…AAWI, MMPS…AIIA, IYMP…VLYF, YGLS…NYLL, PLPI…SFLI, and KGGF…YIWI.

It belongs to the HAK/KUP transporter (TC 2.A.72) family.

The protein resides in the cell membrane. It catalyses the reaction K(+)(in) + H(+)(in) = K(+)(out) + H(+)(out). Transport of potassium into the cell. Likely operates as a K(+):H(+) symporter. The chain is Probable potassium transport system protein Kup from Clostridium perfringens (strain ATCC 13124 / DSM 756 / JCM 1290 / NCIMB 6125 / NCTC 8237 / Type A).